A 338-amino-acid polypeptide reads, in one-letter code: N-acetyl-gamma-glutamyl-phosphate reductase (338 aa).

The active site involves Cys148.

This sequence belongs to the NAGSA dehydrogenase family. Type 1 subfamily.

The protein localises to the cytoplasm. It carries out the reaction N-acetyl-L-glutamate 5-semialdehyde + phosphate + NADP(+) = N-acetyl-L-glutamyl 5-phosphate + NADPH + H(+). Its pathway is amino-acid biosynthesis; L-arginine biosynthesis; N(2)-acetyl-L-ornithine from L-glutamate: step 3/4. Its function is as follows. Catalyzes the NADPH-dependent reduction of N-acetyl-5-glutamyl phosphate to yield N-acetyl-L-glutamate 5-semialdehyde. The protein is N-acetyl-gamma-glutamyl-phosphate reductase of Leptospira borgpetersenii serovar Hardjo-bovis (strain JB197).